The following is a 368-amino-acid chain: Glycine betaine monooxygenase reductase subunit (368 aa).

The FAD-binding FR-type domain maps to 16 to 119; sequence NGRHNVRCVK…HGPVGDFNVI (104 aa). The 2Fe-2S ferredoxin-type domain occupies 284 to 368; that stretch reads LQVEFSNSGK…TPKSHVAIEF (85 aa). Residues Cys318, Cys323, Cys326, and Cys356 each coordinate [2Fe-2S] cluster.

In the N-terminal section; belongs to the FAD-binding oxidoreductase type 6 family. As to quaternary structure, monomer. The system is composed of an oxygenase subunit (BmoA) and a reductase subunit (BmoB). Maximal specific activity is obtained when the ratio of BmoA to BmoB is 5:1. The cofactor is FAD. Requires [2Fe-2S] cluster as cofactor.

It carries out the reaction glycine betaine + NADH + O2 + H(+) = N,N-dimethylglycine + formaldehyde + NAD(+) + H2O. Involved in degradation of glycine betaine. Part of a Rieske-type oxygenase system that catalyzes the conversion of glycine betaine (GB) to dimethylglycine (DMG). This subunit is the ferredoxin reductase component of the system. NADH is the preferred electron donor. The polypeptide is Glycine betaine monooxygenase reductase subunit (Chromohalobacter salexigens (strain ATCC BAA-138 / DSM 3043 / CIP 106854 / NCIMB 13768 / 1H11)).